Here is a 97-residue protein sequence, read N- to C-terminus: Small ribosomal subunit protein bS20 (97 aa).

This sequence belongs to the bacterial ribosomal protein bS20 family.

In terms of biological role, binds directly to 16S ribosomal RNA. In Methylibium petroleiphilum (strain ATCC BAA-1232 / LMG 22953 / PM1), this protein is Small ribosomal subunit protein bS20.